Consider the following 1012-residue polypeptide: MIPSDMDLIESTAEQPDKLYNINRIRAFKDVPFLIRRTESKDTIVSYADAADEIQVLMNFLRKNGVPDEAGIALRVTEHTPASSLMILAILNNKCHFFPTDKMMLSQDLYSQMSTAGVDYLVANKHLTVAPLYFTFLGSILVFKEDCRLYRVKLKSADETVQSKKPLPANMCYTISTTGTTGKPKLIHVPYECIAPNIVGLSQKLNVSMADIIYLGTPITFDPFVVEFFLALQNGATLLTSRHSMRDSPSKVLSALFPDNLATPGITVLQMTPSLFRQFGASSIKDRVLSGSSSLRVLLLGGEPFPSNVELVTWMHPSVLMQKHICNIYGITEISCWSLLHIVQSLQSPVPLGTPIEEDTVLRIESEDNETSQQGELFLGSVKRRCYIPEVDDQANASQDDSGICFRATGDLVTRQQDGTLFYSERSNDVVKRAGNRISLGLITRKIQKCLPSSELTTCLWLEDLQKLICCIRTLESKTRVQQRVQTFDILSKVSIAEQPDRFVYLQHFPCNVHGKLDKQQLLKMCIPLAQPAQQILKSYLHDRLECVEEPDDSASKKQRLDDAAPCGYDLSFRQAGGTSFHAITICREIGLQMCIDDEQRHLFEMLLDENIPLRTVLRFLDTAKLVANNIKRKNVETAVVVSACQSGLIIKRIEQPVLKLQIYWKVNFEKCIDSPVTEYEGRFICVGAHSKILRTLNPQTGSEYSVVKLPERIECKVTFLTEQLAMVGCYDGCLYGFNPQTGNIVFRVGIGGLIKSQPMLTADGRRIIVCSYADDYNVYCLSAERQEVLWCLRIGEKPIFASPLELPREQSLIVCTLDGSYSRVAITDGSVEWTQKFREPVFSTPVLLESVSNIFLSAEVAGRVHACHVGNGKILATFSTEGNIFSSLVVKTPPTFMGHSFAIFGCIDQHLYCLRCKTGPGGKSVELELHWKVDVGAPIYATPTLLTVQPNGLLVWCAATDGRVMLINFRNGEIQWSDKLPGQVFSSACFIEDLRRVFVGCRDNFLYCLGI.

ATP-binding positions include 177-185, aspartate 411, arginine 426, and lysine 516; that span reads TTGTTGKPK.

It belongs to the ATP-dependent AMP-binding enzyme family.

In terms of biological role, covalently binds beta-alanine in an ATP-dependent manner to form a thioester bond with its phosphopantetheine group and transfers it to an, as yet, unknown acceptor. May be required for a post-translational protein modification or for post-transcriptional modification of an RNA. The protein is Beta-alanine-activating enzyme of Drosophila melanogaster (Fruit fly).